The primary structure comprises 395 residues: ATP phosphoribosyltransferase regulatory subunit (395 aa).

It belongs to the class-II aminoacyl-tRNA synthetase family. HisZ subfamily. Heteromultimer composed of HisG and HisZ subunits.

It is found in the cytoplasm. The protein operates within amino-acid biosynthesis; L-histidine biosynthesis; L-histidine from 5-phospho-alpha-D-ribose 1-diphosphate: step 1/9. Functionally, required for the first step of histidine biosynthesis. May allow the feedback regulation of ATP phosphoribosyltransferase activity by histidine. The sequence is that of ATP phosphoribosyltransferase regulatory subunit from Thioalkalivibrio sulfidiphilus (strain HL-EbGR7).